We begin with the raw amino-acid sequence, 1364 residues long: Collagen alpha-2(I) chain (1364 aa).

The first 22 residues, 1-22 (MLSFVDTRTLLLLAVTSCLATC), serve as a signal peptide directing secretion. Gln-23 carries the post-translational modification Pyrrolidone carboxylic acid. Positions 23–79 (QSLQEATARKGPSGDRGPRGERGPPGPPGRDGDDGIPGPPGPPGPPGPPGLGGNFAA) are cleaved as a propeptide — N-terminal propeptide. Residues 26–1128 (QEATARKGPS…QPRSPTSLRP (1103 aa)) form a disordered region. Basic and acidic residues predominate over residues 34–44 (PSGDRGPRGER). Residues 59–71 (PGPPGPPGPPGPP) are compositionally biased toward pro residues. Gln-80 bears the Pyrrolidone carboxylic acid mark. Residue Lys-84 is modified to Allysine. Residues 93-130 (LMGPRGPPGASGAPGPQGFQGPPGEPGEPGQTGPAGAR) show a composition bias toward low complexity. A 4-hydroxyproline mark is found at Pro-100, Pro-106, Pro-115, Pro-118, Pro-121, Pro-133, Pro-136, Pro-145, Pro-151, Pro-166, Pro-169, and Pro-172. The span at 139 to 153 (AGEDGHPGKPGRPGE) shows a compositional bias: basic and acidic residues. Lys-175 is modified (5-hydroxylysine; alternate). The O-linked (Gal...) hydroxylysine; alternate glycan is linked to Lys-175. 4-hydroxyproline occurs at positions 190 and 193. A 5-hydroxylysine modification is found at Lys-196. 4-hydroxyproline is present on residues Pro-199, Pro-202, Pro-208, Pro-217, Pro-226, Pro-253, Pro-256, and Pro-259. Low complexity predominate over residues 223–252 (VGAPGPAGARGSDGSVGPVGPAGPIGSAGP). The residue at position 262 (Lys-262) is a 5-hydroxylysine. Residues Pro-271, Pro-286, Pro-295, and Pro-304 each carry the 4-hydroxyproline modification. Low complexity predominate over residues 277–291 (AGPRGEVGLPGLSGP). Low complexity predominate over residues 298–319 (PGANGLPGAKGAAGLPGVAGAP). Position 307 is a 5-hydroxylysine (Lys-307). 4-hydroxyproline occurs at positions 313, 319, 322, 328, and 346. The segment covering 328 to 343 (PGPVGAAGATGARGLV) has biased composition (low complexity). Residue Lys-352 is modified to 5-hydroxylysine. A 4-hydroxyproline mark is found at Pro-361, Pro-367, Pro-370, Pro-391, Pro-394, Pro-400, Pro-406, Pro-439, and Pro-442. A compositionally biased stretch (low complexity) spans 396–406 (LRGNPGSRGLP). 2 stretches are compositionally biased toward low complexity: residues 468–487 (LPGI…RGEP) and 511–535 (AGLA…PGLQ). A compositionally biased stretch (gly residues) spans 536–545 (GVQGGKGEQG). Low complexity-rich tracts occupy residues 592 to 609 (PGES…SRGP), 621 to 643 (EPGV…PGER), 666 to 688 (SPGR…AGAN), and 715 to 735 (VGPA…QPGA). The span at 736-745 (KGERGTKGPK) shows a compositional bias: basic and acidic residues. Positions 748–763 (NGPVGPTGPVGAAGPS) are enriched in low complexity. Gly residues predominate over residues 773 to 782 (GSRGDGGPPG). 5 stretches are compositionally biased toward low complexity: residues 783–793 (ATGFPGAAGRT), 861–874 (PQGL…LGLP), 891–930 (EPGP…NPGN), 948–961 (YPGN…AGAP), and 978–999 (EPGP…PSGP). A compositionally biased stretch (basic and acidic residues) spans 1003–1014 (RGDKGEPGDKGP). A compositionally biased stretch (pro residues) spans 1087–1101 (AGPPGPPGPPGPPGP). A propeptide spans 1118-1364 (DQPRSPTSLR…RLNIGPVCFK (247 aa)) (C-terminal propeptide). In terms of domain architecture, Fibrillar collagen NC1 spans 1131 to 1364 (YEVDATLKSL…RLNIGPVCFK (234 aa)). 3 disulfide bridges follow: Cys-1161/Cys-1193, Cys-1201/Cys-1362, and Cys-1270/Cys-1315. Asp-1179, Asn-1181, Gln-1182, Cys-1184, and Asp-1187 together coordinate Ca(2+). N-linked (GlcNAc...) asparagine glycosylation is present at Asn-1265.

Belongs to the fibrillar collagen family. As to quaternary structure, trimers of one alpha 2(I) and two alpha 1(I) chains. Interacts (via C-terminus) with TMEM131 (via PapD-L domain); the interaction is direct and is involved in assembly and TRAPPIII ER-to-Golgi transport complex-dependent secretion of collagen. Prolines at the third position of the tripeptide repeating unit (G-X-Y) are hydroxylated in some or all of the chains. In terms of tissue distribution, forms the fibrils of tendon, ligaments and bones. In bones the fibrils are mineralized with calcium hydroxyapatite.

Its subcellular location is the secreted. It is found in the extracellular space. The protein resides in the extracellular matrix. In terms of biological role, type I collagen is a member of group I collagen (fibrillar forming collagen). This is Collagen alpha-2(I) chain (COL1A2) from Bos taurus (Bovine).